Here is a 151-residue protein sequence, read N- to C-terminus: Small ribosomal subunit protein uS19 (151 aa).

Belongs to the universal ribosomal protein uS19 family.

In terms of biological role, protein S19 forms a complex with S13 that binds strongly to the 16S ribosomal RNA. In Thermoplasma acidophilum (strain ATCC 25905 / DSM 1728 / JCM 9062 / NBRC 15155 / AMRC-C165), this protein is Small ribosomal subunit protein uS19 (rps19).